A 174-amino-acid chain; its full sequence is C-type lectin domain family 2 member A (174 aa).

Over 1–27 the chain is Cytoplasmic; it reads MINPELRDGRADGFIHRIVPKLIQNWK. A helical; Signal-anchor for type II membrane protein transmembrane segment spans residues 28 to 48; it reads IGLMCFLSIIITTVCIIMIAT. Residues 49 to 174 lie on the Extracellular side of the membrane; sequence WSKHAKPVAC…WICSKPKYFL (126 aa). Cysteines 58 and 69 form a disulfide. Residues 65–174 form the C-type lectin domain; the sequence is VRDKCFYFSD…WICSKPKYFL (110 aa). Residues N78, N130, and N143 are each glycosylated (N-linked (GlcNAc...) asparagine). C86 and C167 are oxidised to a cystine.

In terms of assembly, homodimer; non-disulfide-linked. Interacts with KLRB1. Interacts with KLRF2. In terms of processing, N-glycosylated. Mainly expressed in skin. Also expressed in keratinocytes, spleen, thymus, small intestine, peripheral blood monocytes, bone marrow, ovary, testis and skin. High expression in CD8(+), B-lymphocytes and naive CD4(+) T-cells. Restricted mostly to proliferating lymphocytes. Not detected in myeloid leukocytes or natural killer (NK) cells.

The protein resides in the cell membrane. Functionally, membrane-bound protein expressed mainly on keratinocytes which acts as a ligand to stimulate the activating receptor NKp65/KLRF2, expressed on the surface of natural killer (NK) cells. Facilitates thereby dedicated immune recognition of keratinocytes leading to natural killer cell mediated cytotoxicity. Also plays a role in modulating the extent of T-cell expansion. This is C-type lectin domain family 2 member A (CLEC2A) from Homo sapiens (Human).